The chain runs to 101 residues: Acylphosphatase-1 (101 aa).

Ser-2 carries the N-acetylserine modification. An N-acetylalanine modification is found at Ser-2. Positions 11-101 (SVDYEVFGKV…LDYSDFQIVK (91 aa)) constitute an Acylphosphatase-like domain. Catalysis depends on residues Arg-26 and Asn-44.

This sequence belongs to the acylphosphatase family. As to expression, organ-common type isozyme is found in many different tissues.

The enzyme catalyses an acyl phosphate + H2O = a carboxylate + phosphate + H(+). This is Acylphosphatase-1 (ACYP1) from Sus scrofa (Pig).